We begin with the raw amino-acid sequence, 372 residues long: tRNA 2-selenouridine synthase (372 aa).

The region spanning 17–140 (FLQDIPLIDV…LRNFLLTTLE (124 aa)) is the Rhodanese domain. The active-site S-selanylcysteine intermediate is Cys-100.

This sequence belongs to the SelU family. As to quaternary structure, monomer.

It catalyses the reaction 5-methylaminomethyl-2-thiouridine(34) in tRNA + selenophosphate + (2E)-geranyl diphosphate + H2O + H(+) = 5-methylaminomethyl-2-selenouridine(34) in tRNA + (2E)-thiogeraniol + phosphate + diphosphate. The enzyme catalyses 5-methylaminomethyl-2-thiouridine(34) in tRNA + (2E)-geranyl diphosphate = 5-methylaminomethyl-S-(2E)-geranyl-thiouridine(34) in tRNA + diphosphate. It carries out the reaction 5-methylaminomethyl-S-(2E)-geranyl-thiouridine(34) in tRNA + selenophosphate + H(+) = 5-methylaminomethyl-2-(Se-phospho)selenouridine(34) in tRNA + (2E)-thiogeraniol. The catalysed reaction is 5-methylaminomethyl-2-(Se-phospho)selenouridine(34) in tRNA + H2O = 5-methylaminomethyl-2-selenouridine(34) in tRNA + phosphate. Involved in the post-transcriptional modification of the uridine at the wobble position (U34) of tRNA(Lys), tRNA(Glu) and tRNA(Gln). Catalyzes the conversion of 2-thiouridine (S2U-RNA) to 2-selenouridine (Se2U-RNA). Acts in a two-step process involving geranylation of 2-thiouridine (S2U) to S-geranyl-2-thiouridine (geS2U) and subsequent selenation of the latter derivative to 2-selenouridine (Se2U) in the tRNA chain. In Serratia proteamaculans (strain 568), this protein is tRNA 2-selenouridine synthase.